The primary structure comprises 104 residues: Phosphocarrier protein HPr (104 aa).

The HPr domain occupies 17 to 104 (ELSAIFMIRN…EVFNSGFGEL (88 aa)). Catalysis depends on His31, which acts as the Pros-phosphohistidine intermediate.

It belongs to the HPr family.

The protein localises to the cytoplasm. General (non sugar-specific) component of the phosphoenolpyruvate-dependent sugar phosphotransferase system (sugar PTS). This major carbohydrate active-transport system catalyzes the phosphorylation of incoming sugar substrates concomitantly with their translocation across the cell membrane. The phosphoryl group from phosphoenolpyruvate (PEP) is transferred to the phosphoryl carrier protein HPr by enzyme I. Phospho-HPr then transfers it to the PTS EIIA domain. In Chlamydia muridarum (strain MoPn / Nigg), this protein is Phosphocarrier protein HPr (ptsH).